Consider the following 387-residue polypeptide: S-adenosylmethionine synthase (387 aa).

H15 provides a ligand contact to ATP. A Mg(2+)-binding site is contributed by D17. A K(+)-binding site is contributed by E43. L-methionine contacts are provided by E56 and Q99. Residues 99-109 are flexible loop; it reads QSPDIAQGVNR. ATP-binding positions include 166 to 168, 232 to 233, D241, 247 to 248, A264, and K268; these read DAK, RF, and RK. Position 241 (D241) interacts with L-methionine. K272 lines the L-methionine pocket.

This sequence belongs to the AdoMet synthase family. Homotetramer; dimer of dimers. The cofactor is Mg(2+). Requires K(+) as cofactor.

The protein localises to the cytoplasm. It carries out the reaction L-methionine + ATP + H2O = S-adenosyl-L-methionine + phosphate + diphosphate. It functions in the pathway amino-acid biosynthesis; S-adenosyl-L-methionine biosynthesis; S-adenosyl-L-methionine from L-methionine: step 1/1. Functionally, catalyzes the formation of S-adenosylmethionine (AdoMet) from methionine and ATP. The overall synthetic reaction is composed of two sequential steps, AdoMet formation and the subsequent tripolyphosphate hydrolysis which occurs prior to release of AdoMet from the enzyme. The sequence is that of S-adenosylmethionine synthase from Nitrosomonas europaea (strain ATCC 19718 / CIP 103999 / KCTC 2705 / NBRC 14298).